The chain runs to 457 residues: Bifunctional protein GlmU (457 aa).

The interval 1–230 (MSKRYAVVLA…FEESLGVNDR (230 aa)) is pyrophosphorylase. UDP-N-acetyl-alpha-D-glucosamine contacts are provided by residues 9-12 (LAAG), Lys-23, Gln-73, and 78-79 (GT). Residue Asp-103 participates in Mg(2+) binding. Residues Gly-140, Glu-155, Asn-170, and Asn-228 each coordinate UDP-N-acetyl-alpha-D-glucosamine. Asn-228 contacts Mg(2+). A linker region spans residues 231–251 (IALAEASRLMQRRINENHMRN). An N-acetyltransferase region spans residues 252–457 (GVTLVNPENT…GYAKHLNHGK (206 aa)). Positions 333 and 351 each coordinate UDP-N-acetyl-alpha-D-glucosamine. Catalysis depends on His-363, which acts as the Proton acceptor. The UDP-N-acetyl-alpha-D-glucosamine site is built by Tyr-366 and Asn-377. Acetyl-CoA contacts are provided by residues 386–387 (NY), Ala-423, and Arg-440.

The protein in the N-terminal section; belongs to the N-acetylglucosamine-1-phosphate uridyltransferase family. It in the C-terminal section; belongs to the transferase hexapeptide repeat family. Homotrimer. It depends on Mg(2+) as a cofactor.

It is found in the cytoplasm. It carries out the reaction alpha-D-glucosamine 1-phosphate + acetyl-CoA = N-acetyl-alpha-D-glucosamine 1-phosphate + CoA + H(+). The catalysed reaction is N-acetyl-alpha-D-glucosamine 1-phosphate + UTP + H(+) = UDP-N-acetyl-alpha-D-glucosamine + diphosphate. The protein operates within nucleotide-sugar biosynthesis; UDP-N-acetyl-alpha-D-glucosamine biosynthesis; N-acetyl-alpha-D-glucosamine 1-phosphate from alpha-D-glucosamine 6-phosphate (route II): step 2/2. It functions in the pathway nucleotide-sugar biosynthesis; UDP-N-acetyl-alpha-D-glucosamine biosynthesis; UDP-N-acetyl-alpha-D-glucosamine from N-acetyl-alpha-D-glucosamine 1-phosphate: step 1/1. Its pathway is bacterial outer membrane biogenesis; LPS lipid A biosynthesis. Catalyzes the last two sequential reactions in the de novo biosynthetic pathway for UDP-N-acetylglucosamine (UDP-GlcNAc). The C-terminal domain catalyzes the transfer of acetyl group from acetyl coenzyme A to glucosamine-1-phosphate (GlcN-1-P) to produce N-acetylglucosamine-1-phosphate (GlcNAc-1-P), which is converted into UDP-GlcNAc by the transfer of uridine 5-monophosphate (from uridine 5-triphosphate), a reaction catalyzed by the N-terminal domain. This Listeria monocytogenes serotype 4b (strain CLIP80459) protein is Bifunctional protein GlmU.